Reading from the N-terminus, the 128-residue chain is Fluoride-specific ion channel FluC (128 aa).

4 consecutive transmembrane segments (helical) span residues 2–22 (LTFAPLNFLAIGVGATLGAWL), 37–57 (WGTLTANLVGGYLIGVMVALI), 65–85 (AWIRLAAVTGFLGGLTTFSTF), and 101–121 (AAAYAGASLAGSLAMTGLGLA). 2 residues coordinate Na(+): Gly-77 and Thr-80.

It belongs to the fluoride channel Fluc/FEX (TC 1.A.43) family.

It is found in the cell inner membrane. It carries out the reaction fluoride(in) = fluoride(out). With respect to regulation, na(+) is not transported, but it plays an essential structural role and its presence is essential for fluoride channel function. Its function is as follows. Fluoride-specific ion channel. Important for reducing fluoride concentration in the cell, thus reducing its toxicity. This chain is Fluoride-specific ion channel FluC, found in Bordetella bronchiseptica (strain ATCC BAA-588 / NCTC 13252 / RB50) (Alcaligenes bronchisepticus).